A 477-amino-acid chain; its full sequence is Methylenetetrahydrofolate--tRNA-(uracil-5-)-methyltransferase TrmFO (477 aa).

FAD is bound at residue 14–19; that stretch reads GGGLAG.

Belongs to the MnmG family. TrmFO subfamily. Requires FAD as cofactor.

It is found in the cytoplasm. It carries out the reaction uridine(54) in tRNA + (6R)-5,10-methylene-5,6,7,8-tetrahydrofolate + NADH + H(+) = 5-methyluridine(54) in tRNA + (6S)-5,6,7,8-tetrahydrofolate + NAD(+). It catalyses the reaction uridine(54) in tRNA + (6R)-5,10-methylene-5,6,7,8-tetrahydrofolate + NADPH + H(+) = 5-methyluridine(54) in tRNA + (6S)-5,6,7,8-tetrahydrofolate + NADP(+). In terms of biological role, catalyzes the folate-dependent formation of 5-methyl-uridine at position 54 (M-5-U54) in all tRNAs. In Rhizobium etli (strain ATCC 51251 / DSM 11541 / JCM 21823 / NBRC 15573 / CFN 42), this protein is Methylenetetrahydrofolate--tRNA-(uracil-5-)-methyltransferase TrmFO.